The following is a 473-amino-acid chain: Heavy metal-associated isoprenylated plant protein 32 (473 aa).

The region spanning 9 to 72 (IQTCVLKVNI…KLAKSGKHAE (64 aa)) is the HMA domain. A metal cation contacts are provided by Cys20 and Cys23. Disordered regions lie at residues 96 to 139 (QIDH…KMGQ), 162 to 230 (KLPP…PNMT), and 246 to 343 (ANLA…QNMS). Residues 118 to 131 (KNGGGGGGGGGGGN) show a composition bias toward gly residues. Positions 187 to 217 (PEDDDDDDFSDEFDDEFTDDDDDEFDDEFDD) are enriched in acidic residues. Residues 253–339 (AKNGGKGAPA…GFRPMGGGGP (87 aa)) show a composition bias toward gly residues. The residue at position 470 (Cys470) is a Cysteine methyl ester. Cys470 is lipidated: S-farnesyl cysteine. Residues 471-473 (DIM) constitute a propeptide, removed in mature form.

The protein belongs to the HIPP family.

Its function is as follows. Heavy-metal-binding protein. This chain is Heavy metal-associated isoprenylated plant protein 32, found in Arabidopsis thaliana (Mouse-ear cress).